The sequence spans 483 residues: Protein adenylyltransferase Fic (483 aa).

The helical transmembrane segment at 20 to 42 threads the bilayer; the sequence is AFFFIAGSLATFVFHALTSSSSV. 2 TPR repeats span residues 107-140 and 141-175; these read ALGA…APKH and PEVL…SPSN. Residues 232–237 carry the Inhibitory (S/T)XXXE(G/N) motif motif; sequence SVGIEG. Residues Glu236 and 317–320 contribute to the ATP site; that span reads VGGH. The Fido domain occupies 286–421; sequence ITLKDILELH…IRPFVRFIAD (136 aa). His364 is an active-site residue. Residues 368-375, 400-401, and Asn408 contribute to the ATP site; these read DGNGRTSR and YY. The disordered stretch occupies residues 464–483; sequence SAPEPYESGSGLDSGVNGMP.

Belongs to the fic family. As to quaternary structure, homodimer.

The protein resides in the membrane. The enzyme catalyses L-tyrosyl-[protein] + ATP = O-(5'-adenylyl)-L-tyrosyl-[protein] + diphosphate. The catalysed reaction is L-threonyl-[protein] + ATP = 3-O-(5'-adenylyl)-L-threonyl-[protein] + diphosphate. It catalyses the reaction 3-O-(5'-adenylyl)-L-threonyl-[protein] + H2O = L-threonyl-[protein] + AMP + H(+). The side chain of Glu-236 determines which of the two opposing activities (AMPylase or de-AMPylase) will take place. In response to endoplasmic reticulum stress, mediates de-AMPylase activity. Adenylyltransferase activity is inhibited by the inhibitory helix present at the N-terminus: Glu-236 binds ATP and competes with ATP-binding at Arg-375, thereby preventing adenylyltransferase activity. In unstressed cells, disengagement of Glu-236 promotes adenylyltransferase activity. Activation dissociates ATP-binding from Glu-236, allowing ordered binding of the entire ATP moiety with the alpha-phosphate in an orientation that is productive for accepting an incoming target hydroxyl side chain. Its function is as follows. Protein that can both mediate the addition of adenosine 5'-monophosphate (AMP) to specific residues of target proteins (AMPylation), and the removal of the same modification from target proteins (de-AMPylation), depending on the context. The side chain of Glu-236 determines which of the two opposing activities (AMPylase or de-AMPylase) will take place. Acts as a key regulator of the unfolded protein response (UPR) by mediating AMPylation or de-AMPylation of Hsc70-3/BiP. In unstressed cells, acts as an adenylyltransferase by mediating AMPylation of Hsc70-3/BiP at 'Thr-518', thereby inactivating it. In response to endoplasmic reticulum stress, acts as a phosphodiesterase by mediating removal of ATP (de-AMPylation) from Hsc70-3/BiP at 'Thr-518', leading to restore HSPA5/BiP activity. The protein is Protein adenylyltransferase Fic of Drosophila grimshawi (Hawaiian fruit fly).